The sequence spans 231 residues: Flagellar L-ring protein (231 aa).

A signal peptide spans 1-18 (MNRFICVLALSGSAVLAG). Cysteine 19 is lipidated: N-palmitoyl cysteine. A lipid anchor (S-diacylglycerol cysteine) is attached at cysteine 19.

This sequence belongs to the FlgH family. As to quaternary structure, the basal body constitutes a major portion of the flagellar organelle and consists of four rings (L,P,S, and M) mounted on a central rod.

The protein resides in the cell outer membrane. It is found in the bacterial flagellum basal body. Assembles around the rod to form the L-ring and probably protects the motor/basal body from shearing forces during rotation. The polypeptide is Flagellar L-ring protein (Pseudomonas fluorescens (strain ATCC BAA-477 / NRRL B-23932 / Pf-5)).